The following is a 745-amino-acid chain: uncharacterized protein (745 aa).

One can recognise an HTH araC/xylS-type domain in the interval asparagine 158–aspartate 256. 2 DNA-binding regions (H-T-H motif) span residues serine 175–leucine 196 and isoleucine 223–threonine 246.

This is an uncharacterized protein from Staphylococcus aureus (strain COL).